A 375-amino-acid polypeptide reads, in one-letter code: Alcohol dehydrogenase 1A (375 aa).

N-acetylserine is present on S2. The residue at position 23 (S23) is a Phosphoserine. C47 serves as a coordination point for Zn(2+). NAD(+) is bound at residue 48–52 (GTDDH). The Zn(2+) site is built by H68, C98, C101, C104, C112, and C175. NAD(+) is bound by residues 200 to 205 (GLGGVG), D224, K229, I270, 293 to 295 (VGV), 318 to 320 (AIL), and R370.

Belongs to the zinc-containing alcohol dehydrogenase family. In terms of assembly, dimer of identical or heterodimer of closely related subunits alpha, beta, or gamma that are encoded by genes ADH1A, ADH1B, and ADH1C, respectively. The cofactor is Zn(2+).

Its subcellular location is the cytoplasm. The catalysed reaction is a primary alcohol + NAD(+) = an aldehyde + NADH + H(+). The enzyme catalyses a secondary alcohol + NAD(+) = a ketone + NADH + H(+). It catalyses the reaction butan-1-ol + NAD(+) = butanal + NADH + H(+). It carries out the reaction 1-propanol + NAD(+) = propanal + NADH + H(+). Its function is as follows. Alcohol dehydrogenase. Oxidizes primary as well as secondary alcohols. Ethanol is a very poor substrate. In Homo sapiens (Human), this protein is Alcohol dehydrogenase 1A (ADH1A).